The primary structure comprises 585 residues: Arginine--tRNA ligase (585 aa).

The 'HIGH' region signature appears at 131–141; sequence ANPTGPMHVGH.

This sequence belongs to the class-I aminoacyl-tRNA synthetase family. Monomer.

The protein resides in the cytoplasm. The catalysed reaction is tRNA(Arg) + L-arginine + ATP = L-arginyl-tRNA(Arg) + AMP + diphosphate. The protein is Arginine--tRNA ligase of Bartonella bacilliformis (strain ATCC 35685 / KC583 / Herrer 020/F12,63).